The primary structure comprises 106 residues: Protamine (106 aa).

The segment at 1–106 (ARAVRRRRAR…TRRRRRRARR (106 aa)) is disordered.

Sperm.

Its subcellular location is the nucleus. It is found in the chromosome. The chain is Protamine from Phorcus turbinatus (Sea snail).